Consider the following 72-residue polypeptide: Omega-conotoxin-like S6.6 (72 aa).

Residues 1-22 (MKLTCVVIVAVLLLTACQLLTA) form the signal peptide. Positions 23–45 (DDSRGTQKHRALRSDTKLSMSTR) are excised as a propeptide. 3 cysteine pairs are disulfide-bonded: cysteine 46-cysteine 61, cysteine 53-cysteine 65, and cysteine 60-cysteine 71. Cysteine 71 bears the Cysteine amide mark.

This sequence belongs to the conotoxin O1 superfamily. Expressed by the venom duct.

The protein localises to the secreted. In terms of biological role, omega-conotoxins act at presynaptic membranes, they bind and block voltage-gated calcium channels (Cav). This toxin blocks N-, P- and Q-type calcium channels. The protein is Omega-conotoxin-like S6.6 of Conus striatus (Striated cone).